A 120-amino-acid polypeptide reads, in one-letter code: MESQAKVKISDKAEGIIERDVQNAVIGRREISLKVYHMGSGTPSRKDIIKAIIQAFASQENLVVVRKISTSYGAGISNVKLHIYKSREILEKIEPKYLLDRDAGTKQKKGGSKGGQGAKG.

Positions 101 to 120 (RDAGTKQKKGGSKGGQGAKG) are disordered.

Belongs to the eukaryotic ribosomal protein eS24 family.

This Saccharolobus islandicus (strain M.16.27) (Sulfolobus islandicus) protein is Small ribosomal subunit protein eS24.